The primary structure comprises 275 residues: MDNMLPSPGYNIPSIGTPIHHQEDESIQTQQQQQTPRHPASFGMNLPHLQHANISQTQDNHMMSPAIQRQHEGSMSIYGPGTPAPATPHTPASVADPGIIPVLENIVSTVNLGCRLDLKKIALQARNAEYNPKRFAAVIMRIREPRTTALIFSSGKMVCTGAKSEEDSRLAARKYARIVQKLGFSAKFLDFKIQNMVGSCDVKFPIRLEGLVLTHGQFSSYEPELFPGLIYRMVKPRIVLLIFVSGKVVLTGAKVRQEIYDAFENIYPILKGFKK.

Disordered stretches follow at residues 23 to 45 (EDES…FGMN) and 73 to 92 (GSMS…HTPA). A run of 2 repeats spans residues 103–179 (LENI…ARIV) and 193–270 (IQNM…YPIL).

This sequence belongs to the TBP family. In terms of assembly, belongs to the TFIID complex together with the TBP-associated factors (TAFs). Binds DNA as monomer.

It is found in the nucleus. In terms of biological role, general transcription factor that functions at the core of the DNA-binding multiprotein factor TFIID. Binding of TFIID to the TATA box is the initial transcriptional step of the pre-initiation complex (PIC), playing a role in the activation of eukaryotic genes transcribed by RNA polymerase II. This Artemia franciscana (Brine shrimp) protein is TATA-box-binding protein.